We begin with the raw amino-acid sequence, 674 residues long: Primary amine oxidase (674 aa).

The N-terminal stretch at 1–25 (MASTTTMRLALFSVLTLLSFHAVVS) is a signal peptide. N-linked (GlcNAc...) asparagine glycosylation is present at Asn-156. Cys-162 and Cys-183 are disulfide-bonded. Polar residues predominate over residues 226–236 (ENTEYQVSKQS). Positions 226-251 (ENTEYQVSKQSPPFGPKQHSLTSHQP) are disordered. A substrate-binding site is contributed by 323-334 (FFDSGEFGFGLS). Catalysis depends on Asp-325, which acts as the Proton acceptor. Cys-344 and Cys-370 are oxidised to a cystine. Asn-389 carries N-linked (GlcNAc...) asparagine glycosylation. Position 409 to 414 (409 to 414 (VGNYDN)) interacts with substrate. Residue Tyr-412 is the Schiff-base intermediate with substrate; via topaquinone of the active site. At Tyr-412 the chain carries 2',4',5'-topaquinone. Residues His-467 and His-469 each coordinate Cu cation. Positions 476, 477, 478, 617, and 618 each coordinate Mn(2+). His-628 contacts Cu cation.

It belongs to the copper/topaquinone oxidase family. In terms of assembly, homodimer. The cofactor is Cu cation. Mn(2+) is required as a cofactor. L-topaquinone serves as cofactor. Topaquinone (TPQ) is generated by copper-dependent autoxidation of a specific tyrosyl residue.

It carries out the reaction a primary methyl amine + O2 + H2O = an aldehyde + H2O2 + NH4(+). This Pisum sativum (Garden pea) protein is Primary amine oxidase.